Consider the following 388-residue polypeptide: Granulocyte-macrophage colony-stimulating factor receptor subunit alpha (388 aa).

Residues 1 to 29 (MTSSHAMNITPLAQLALLFSTLLLPGTQA) form the signal peptide. Over 30-327 (LLAPTTPDAG…PLEAEDTRVP (298 aa)) the chain is Extracellular. N-linked (GlcNAc...) asparagine glycans are attached at residues asparagine 43, asparagine 63, asparagine 106, asparagine 132, asparagine 165, and asparagine 237. Positions 228 to 324 (PPRDVTASCN…PAHPLEAEDT (97 aa)) constitute a Fibronectin type-III domain. The WSXWS motif motif lies at 310 to 314 (WGEWS). A helical membrane pass occupies residues 328–348 (GALLYAVTACAVLLCALALGV). At 349 to 388 (TCRRFEVTRRLFPPIPGIRDKVSDDVRVNPETLRKDLLQP) the chain is on the cytoplasmic side. A Box 1 motif motif is present at residues 359 to 367 (LFPPIPGIR).

The protein belongs to the type I cytokine receptor family. Type 5 subfamily. Heterodimer of an alpha and a beta subunit. The beta subunit is common to the IL3, IL5 and GM-CSF receptors. The signaling GM-CSF receptor complex is a dodecamer of two head-to-head hexamers of two alpha, two beta, and two ligand subunits.

Its subcellular location is the membrane. In terms of biological role, low affinity receptor for granulocyte-macrophage colony-stimulating factor. Transduces a signal that results in the proliferation, differentiation, and functional activation of hematopoietic cells. The chain is Granulocyte-macrophage colony-stimulating factor receptor subunit alpha (Csf2ra) from Mus musculus (Mouse).